We begin with the raw amino-acid sequence, 176 residues long: ATP synthase subunit delta (176 aa).

This sequence belongs to the ATPase delta chain family. As to quaternary structure, F-type ATPases have 2 components, F(1) - the catalytic core - and F(0) - the membrane proton channel. F(1) has five subunits: alpha(3), beta(3), gamma(1), delta(1), epsilon(1). F(0) has three main subunits: a(1), b(2) and c(10-14). The alpha and beta chains form an alternating ring which encloses part of the gamma chain. F(1) is attached to F(0) by a central stalk formed by the gamma and epsilon chains, while a peripheral stalk is formed by the delta and b chains.

The protein resides in the cell inner membrane. Functionally, f(1)F(0) ATP synthase produces ATP from ADP in the presence of a proton or sodium gradient. F-type ATPases consist of two structural domains, F(1) containing the extramembraneous catalytic core and F(0) containing the membrane proton channel, linked together by a central stalk and a peripheral stalk. During catalysis, ATP synthesis in the catalytic domain of F(1) is coupled via a rotary mechanism of the central stalk subunits to proton translocation. This protein is part of the stalk that links CF(0) to CF(1). It either transmits conformational changes from CF(0) to CF(1) or is implicated in proton conduction. This Actinobacillus succinogenes (strain ATCC 55618 / DSM 22257 / CCUG 43843 / 130Z) protein is ATP synthase subunit delta.